We begin with the raw amino-acid sequence, 70 residues long: MNLPVKIRRDWHYYAFAIGLIFILNGVVGLLGFEAKGWQTYAVGLVTWVISFWLAGLIIRRRDEETENAQ.

2 consecutive transmembrane segments (helical) span residues 13-33 and 39-59; these read YYAFAIGLIFILNGVVGLLGF and QTYAVGLVTWVISFWLAGLII.

Its subcellular location is the cell membrane. This is an uncharacterized protein from Escherichia coli O6:H1 (strain CFT073 / ATCC 700928 / UPEC).